The primary structure comprises 616 residues: Pyrophosphate--fructose 6-phosphate 1-phosphotransferase subunit alpha (616 aa).

Belongs to the phosphofructokinase type A (PFKA) family. PPi-dependent PFK group II subfamily. Clade 'Long' sub-subfamily. As to quaternary structure, tetramer of two alpha (regulatory) and two beta (catalytic) chains.

The protein localises to the cytoplasm. The protein operates within carbohydrate degradation; glycolysis; D-glyceraldehyde 3-phosphate and glycerone phosphate from D-glucose: step 3/4. With respect to regulation, allosterically activated by fructose 2,6-bisphosphate. In terms of biological role, regulatory subunit of pyrophosphate--fructose 6-phosphate 1-phosphotransferase. The protein is Pyrophosphate--fructose 6-phosphate 1-phosphotransferase subunit alpha of Solanum tuberosum (Potato).